Consider the following 232-residue polypeptide: Probable proteasome subunit alpha type-5 (232 aa).

This sequence belongs to the peptidase T1A family. In terms of assembly, the 26S proteasome consists of a 20S proteasome core and two 19S regulatory subunits. The 20S proteasome core is composed of 28 subunits that are arranged in four stacked rings, resulting in a barrel-shaped structure. The two end rings are each formed by seven alpha subunits, and the two central rings are each formed by seven beta subunits. The catalytic chamber with the active sites is on the inside of the barrel.

Its subcellular location is the cytoplasm. The protein localises to the nucleus. Functionally, the proteasome degrades poly-ubiquitinated proteins in the cytoplasm and in the nucleus. It is essential for the regulated turnover of proteins and for the removal of misfolded proteins. The proteasome is a multicatalytic proteinase complex that is characterized by its ability to cleave peptides with Arg, Phe, Tyr, Leu, and Glu adjacent to the leaving group at neutral or slightly basic pH. It has an ATP-dependent proteolytic activity. In Encephalitozoon cuniculi (strain GB-M1) (Microsporidian parasite), this protein is Probable proteasome subunit alpha type-5 (PUP2).